The following is a 358-amino-acid chain: Homoserine O-acetyltransferase (358 aa).

The AB hydrolase-1 domain occupies 41 to 343 (NAVLICHALT…DYGHDAFLVD (303 aa)). Ser143 (nucleophile) is an active-site residue. Substrate is bound at residue Arg212. Catalysis depends on residues Asp304 and His337. Asp338 contributes to the substrate binding site.

In terms of assembly, homodimer.

The protein resides in the cytoplasm. It carries out the reaction L-homoserine + acetyl-CoA = O-acetyl-L-homoserine + CoA. Its pathway is amino-acid biosynthesis; L-methionine biosynthesis via de novo pathway; O-acetyl-L-homoserine from L-homoserine: step 1/1. Functionally, transfers an acetyl group from acetyl-CoA to L-homoserine, forming acetyl-L-homoserine. Utilizes a ping-pong kinetic mechanism in which the acetyl group of acetyl-CoA is initially transferred to the enzyme to form an acetyl-enzyme intermediate before subsequent transfer to homoserine to form the final product, O-acetylhomoserine. The polypeptide is Homoserine O-acetyltransferase (Haemophilus influenzae (strain ATCC 51907 / DSM 11121 / KW20 / Rd)).